Here is a 132-residue protein sequence, read N- to C-terminus: Transmembrane protein 170B (132 aa).

Over 1–37 the chain is Extracellular; sequence MKAEGGDHSMINLSVQQVLSLWAHGTVLRNLTEMWYW. Residue N12 is glycosylated (N-linked (GlcNAc...) asparagine). The helical transmembrane segment at 38-58 threads the bilayer; sequence IFLWALFSSLFVHGAAGVLMF. Residues 59 to 68 lie on the Cytoplasmic side of the membrane; the sequence is VMLQRHRQGR. A helical transmembrane segment spans residues 69 to 89; the sequence is VISVIAVSIGFLASVTGAMIT. The Extracellular portion of the chain corresponds to 90–104; it reads SAAVAGIYRVAGKNM. The chain crosses the membrane as a helical span at residues 105 to 125; the sequence is APLEALVWGVGQTVLTLIISF. Residues 126–132 lie on the Cytoplasmic side of the membrane; that stretch reads SRILATL.

This sequence belongs to the TMEM170 family. As to quaternary structure, interacts with CTNNB1. As to expression, expressed in normal breast tissues. Down-regulated in breast cancer cells (at protein level).

It localises to the cell membrane. Functionally, negatively regulates the canonical Wnt signaling in breast cancer cells. Exerts an inhibitory effect on breast cancer growth by inhibiting CTNNB1 stabilization and nucleus translocation, which reduces the activity of Wnt targets. The sequence is that of Transmembrane protein 170B (TMEM170B) from Homo sapiens (Human).